Reading from the N-terminus, the 498-residue chain is GTPase Der (498 aa).

EngA-type G domains lie at 3–166 (PVVA…FEEL) and 212–385 (IKFA…RSAT). Residues 9 to 16 (GRPNVGKS), 56 to 60 (DTGGI), 118 to 121 (NKTD), 218 to 225 (GRPNVGKS), 265 to 269 (DTAGV), and 330 to 333 (NKWD) contribute to the GTP site. The 85-residue stretch at 386–470 (KRISTSMLTR…PIHIEFQEGD (85 aa)) folds into the KH-like domain.

It belongs to the TRAFAC class TrmE-Era-EngA-EngB-Septin-like GTPase superfamily. EngA (Der) GTPase family. Associates with the 50S ribosomal subunit.

Functionally, GTPase that plays an essential role in the late steps of ribosome biogenesis. This is GTPase Der from Tolumonas auensis (strain DSM 9187 / NBRC 110442 / TA 4).